The primary structure comprises 90 residues: uncharacterized protein (90 aa).

Residues 25–90 form a disordered region; it reads GEAAYNSPTN…PPIAPPPILD (66 aa). Composition is skewed to polar residues over residues 30–54 and 65–79; these read NSPTNNQKSQGTNSSFGDTSPTESV and NDQTSIGNSDTSNVN.

This is an uncharacterized protein from Bacillus subtilis (strain 168).